We begin with the raw amino-acid sequence, 746 residues long: Eukaryotic translation initiation factor 3 subunit B (746 aa).

The span at 1–11 (MAPSYEHLREA) shows a compositional bias: basic and acidic residues. The interval 1 to 20 (MAPSYEHLREADLDEDEFDE) is disordered. One can recognise an RRM domain in the interval 42 to 128 (TFVVIDGLPE…HTLRVNKLMD (87 aa)). WD repeat units follow at residues 195-234 (DRPNWTESFVQWSPLGTYLLSMHMQGVQLWGGPKWDRLGR), 247-294 (PQEN…RSFA), 307-346 (PRKHPWPAFKWSSDDKYVARLTQGQSISVYELPRMNLLDK), 349-386 (IKVEGVQDFEWAPSRPQRDGVKTYEQMFCYWTPEIGSN), 458-500 (TIKD…FFCP), 517-560 (LDKR…EKPE), and 575-620 (ADHY…LREE).

The protein belongs to the eIF-3 subunit B family. In terms of assembly, component of the eukaryotic translation initiation factor 3 (eIF-3) complex.

Its subcellular location is the cytoplasm. In terms of biological role, RNA-binding component of the eukaryotic translation initiation factor 3 (eIF-3) complex, which is involved in protein synthesis of a specialized repertoire of mRNAs and, together with other initiation factors, stimulates binding of mRNA and methionyl-tRNAi to the 40S ribosome. The eIF-3 complex specifically targets and initiates translation of a subset of mRNAs involved in cell proliferation. The sequence is that of Eukaryotic translation initiation factor 3 subunit B from Pyricularia oryzae (strain 70-15 / ATCC MYA-4617 / FGSC 8958) (Rice blast fungus).